The sequence spans 562 residues: NAD-dependent malic enzyme (562 aa).

Tyrosine 101 (proton donor) is an active-site residue. Residue arginine 154 coordinates NAD(+). The active-site Proton acceptor is the lysine 172. Residues glutamate 243, aspartate 244, and aspartate 267 each coordinate a divalent metal cation. NAD(+) contacts are provided by aspartate 267 and asparagine 415.

This sequence belongs to the malic enzymes family. In terms of assembly, homotetramer. Requires Mg(2+) as cofactor. Mn(2+) serves as cofactor.

It catalyses the reaction (S)-malate + NAD(+) = pyruvate + CO2 + NADH. It carries out the reaction oxaloacetate + H(+) = pyruvate + CO2. This chain is NAD-dependent malic enzyme, found in Shewanella baltica (strain OS155 / ATCC BAA-1091).